A 426-amino-acid polypeptide reads, in one-letter code: Phosphomethylpyrimidine synthase (426 aa).

Substrate-binding positions include N66, M95, Y124, H163, 185-187 (SRG), 226-229 (DGLR), and E265. H269 serves as a coordination point for Zn(2+). Y292 contacts substrate. Residue H333 participates in Zn(2+) binding. Residues C407, C410, and C414 each contribute to the [4Fe-4S] cluster site.

It belongs to the ThiC family. The cofactor is [4Fe-4S] cluster.

The catalysed reaction is 5-amino-1-(5-phospho-beta-D-ribosyl)imidazole + S-adenosyl-L-methionine = 4-amino-2-methyl-5-(phosphooxymethyl)pyrimidine + CO + 5'-deoxyadenosine + formate + L-methionine + 3 H(+). Its pathway is cofactor biosynthesis; thiamine diphosphate biosynthesis. Its function is as follows. Catalyzes the synthesis of the hydroxymethylpyrimidine phosphate (HMP-P) moiety of thiamine from aminoimidazole ribotide (AIR) in a radical S-adenosyl-L-methionine (SAM)-dependent reaction. The protein is Phosphomethylpyrimidine synthase of Thermococcus gammatolerans (strain DSM 15229 / JCM 11827 / EJ3).